The primary structure comprises 243 residues: Carboxy-S-adenosyl-L-methionine synthase (243 aa).

S-adenosyl-L-methionine is bound by residues tyrosine 40, 65-67, 90-91, 118-119, asparagine 133, and arginine 200; these read GCS, DN, and DI.

The protein belongs to the class I-like SAM-binding methyltransferase superfamily. Cx-SAM synthase family. In terms of assembly, homodimer.

It carries out the reaction prephenate + S-adenosyl-L-methionine = carboxy-S-adenosyl-L-methionine + 3-phenylpyruvate + H2O. In terms of biological role, catalyzes the conversion of S-adenosyl-L-methionine (SAM) to carboxy-S-adenosyl-L-methionine (Cx-SAM). This is Carboxy-S-adenosyl-L-methionine synthase from Shewanella sediminis (strain HAW-EB3).